Here is a 108-residue protein sequence, read N- to C-terminus: uncharacterized protein (108 aa).

A run of 2 helical transmembrane segments spans residues 5 to 27 (TVYG…QLEI) and 83 to 105 (IFLM…LNIF).

It localises to the membrane. This is an uncharacterized protein from Schizosaccharomyces pombe (strain 972 / ATCC 24843) (Fission yeast).